A 364-amino-acid polypeptide reads, in one-letter code: DNA polymerase IV (364 aa).

Positions 6 to 186 constitute a UmuC domain; sequence IIHIDMDAFY…LPIESFWGVG (181 aa). Residues aspartate 10 and aspartate 104 each coordinate Mg(2+). Glutamate 105 is an active-site residue.

It belongs to the DNA polymerase type-Y family. In terms of assembly, monomer. Requires Mg(2+) as cofactor.

Its subcellular location is the cytoplasm. It catalyses the reaction DNA(n) + a 2'-deoxyribonucleoside 5'-triphosphate = DNA(n+1) + diphosphate. Its function is as follows. Poorly processive, error-prone DNA polymerase involved in untargeted mutagenesis. Copies undamaged DNA at stalled replication forks, which arise in vivo from mismatched or misaligned primer ends. These misaligned primers can be extended by PolIV. Exhibits no 3'-5' exonuclease (proofreading) activity. May be involved in translesional synthesis, in conjunction with the beta clamp from PolIII. This Bacteroides fragilis (strain YCH46) protein is DNA polymerase IV.